The sequence spans 404 residues: Glucose-1-phosphate adenylyltransferase (404 aa).

Residues Y99, G164, 179-180 (EK), and S197 contribute to the alpha-D-glucose 1-phosphate site.

Belongs to the bacterial/plant glucose-1-phosphate adenylyltransferase family. Homotetramer.

It catalyses the reaction alpha-D-glucose 1-phosphate + ATP + H(+) = ADP-alpha-D-glucose + diphosphate. It functions in the pathway glycan biosynthesis; glycogen biosynthesis. Functionally, involved in the biosynthesis of ADP-glucose, a building block required for the elongation reactions to produce glycogen. Catalyzes the reaction between ATP and alpha-D-glucose 1-phosphate (G1P) to produce pyrophosphate and ADP-Glc. The chain is Glucose-1-phosphate adenylyltransferase from Rhodococcus jostii (strain RHA1).